A 153-amino-acid chain; its full sequence is MGPDLRCFPLLLLLLGLWWSVRPLCAIPKNLTRAQWFTIQHIQPSPLQCNKAMNSVNNYTWHCKPQNTFLHDSFQDVATACNLPNITCKNGQNNCHQSAKPVSLTQCSFTGGNYPNCRYKDAAQYKFFIVACDPPQKGDPPYPFVPVHLDKII.

The signal sequence occupies residues 1 to 26 (MGPDLRCFPLLLLLLGLWWSVRPLCA). The N-linked (GlcNAc...) asparagine glycan is linked to N30. H41 (proton acceptor) is an active-site residue. 4 disulfide bridges follow: C49-C107, C63-C117, C81-C132, and C88-C95. An N-linked (GlcNAc...) asparagine glycan is attached at N58. Residue 64–68 (KPQNT) coordinates substrate. N-linked (GlcNAc...) asparagine glycosylation is present at N85. K89 provides a ligand contact to substrate. H148 (proton donor) is an active-site residue.

It belongs to the pancreatic ribonuclease family. In terms of assembly, interacts (via N-terminus) with bacterial lipopolysaccharide (LPS). As to expression, kidney.

The protein localises to the secreted. The protein resides in the lysosome. Its subcellular location is the cytoplasmic granule. Functionally, ribonuclease which shows a preference for the pyrimidines uridine and cytosine. Has potent antibacterial activity against a range of Gram-positive and Gram-negative bacteria, including P.aeruginosa, A.baumanii, M.luteus, S.aureus, E.faecalis, E.faecium, S.saprophyticus and E.coli. Causes loss of bacterial membrane integrity, and also promotes agglutination of Gram-negative bacteria. Probably contributes to urinary tract sterility. Bactericidal activity is independent of RNase activity. The sequence is that of Ribonuclease K3 (RNASE6) from Sus scrofa (Pig).